A 253-amino-acid chain; its full sequence is Dehydration-responsive element-binding protein 1D (253 aa).

A compositionally biased stretch (polar residues) spans 1-22 (MEKNTAASGQLMTSSAEATPSS). The disordered stretch occupies residues 1–31 (MEKNTAASGQLMTSSAEATPSSPKRPAGRTK). The segment at residues 39–98 (VFRGVRWRGCAGRWVCKVRVPGSRGDRFWIGTSDTAEETARTHDAAMLALCGASASLNFA) is a DNA-binding region (AP2/ERF). The segment at 131–153 (RRVPAPGRGSTATATATSGDAAS) is disordered. The segment covering 134–153 (PAPGRGSTATATATSGDAAS) has biased composition (low complexity).

This sequence belongs to the AP2/ERF transcription factor family. ERF subfamily.

The protein localises to the nucleus. Transcriptional activator that binds specifically to the DNA sequence 5'-[AG]CCGAC-3'. Binding to the C-repeat/DRE element mediates high salinity- and dehydration-inducible transcription. This chain is Dehydration-responsive element-binding protein 1D (DREB1D), found in Oryza sativa subsp. indica (Rice).